We begin with the raw amino-acid sequence, 90 residues long: Protein S100-A6 (90 aa).

EF-hand domains follow at residues 12 to 47 (LIGI…IGSK) and 48 to 83 (LQDA…LAMI). Positions 28 and 33 each coordinate Ca(2+). Lysine 40 is subject to N6-acetyllysine. Residue serine 46 is modified to Phosphoserine. Lysine 47 carries the N6-acetyllysine; alternate modification. At lysine 47 the chain carries N6-succinyllysine; alternate. Residues aspartate 61, asparagine 63, aspartate 65, glutamate 67, and glutamate 72 each contribute to the Ca(2+) site.

Belongs to the S-100 family. Homodimer; head to tail assembly of 2 subunits. Interacts with CACYBP in a calcium-dependent manner. Interacts with ANXA2 and ANXA11 (via N-terminus). Interacts with SUGT1. Interacts with TP53; has higher affinity for TP53 that is phosphorylated on its N-terminal domain, and lower affinity for TP53 that is phosphorylated on its C-terminal domain. Interacts with tropomyosin. Interacts with FKBP4. Interacts with PPP5C (via TPR repeats); the interaction is calcium-dependent and modulates PPP5C activity. Interacts with TPPP; this interaction inhibits TPPP dimerization.

Its subcellular location is the nucleus envelope. The protein resides in the cytoplasm. It localises to the cell membrane. Functionally, may function as calcium sensor and modulator, contributing to cellular calcium signaling. May function by interacting with other proteins, such as TPR-containing proteins, and indirectly play a role in many physiological processes such as the reorganization of the actin cytoskeleton and in cell motility. Binds 2 calcium ions. Calcium binding is cooperative. The polypeptide is Protein S100-A6 (S100A6) (Oryctolagus cuniculus (Rabbit)).